An 864-amino-acid chain; its full sequence is Leucine--tRNA ligase (864 aa).

The 'HIGH' region signature appears at 42 to 52; that stretch reads PYPSGKLHMGH. The short motif at 624-628 is the 'KMSKS' region element; that stretch reads KMSKS. Residue K627 coordinates ATP.

The protein belongs to the class-I aminoacyl-tRNA synthetase family.

It is found in the cytoplasm. It carries out the reaction tRNA(Leu) + L-leucine + ATP = L-leucyl-tRNA(Leu) + AMP + diphosphate. The chain is Leucine--tRNA ligase from Burkholderia pseudomallei (strain 668).